The chain runs to 95 residues: Co-chaperonin GroES (95 aa).

Belongs to the GroES chaperonin family. As to quaternary structure, heptamer of 7 subunits arranged in a ring. Interacts with the chaperonin GroEL.

The protein resides in the cytoplasm. Together with the chaperonin GroEL, plays an essential role in assisting protein folding. The GroEL-GroES system forms a nano-cage that allows encapsulation of the non-native substrate proteins and provides a physical environment optimized to promote and accelerate protein folding. GroES binds to the apical surface of the GroEL ring, thereby capping the opening of the GroEL channel. The protein is Co-chaperonin GroES of Desulfosudis oleivorans (strain DSM 6200 / JCM 39069 / Hxd3) (Desulfococcus oleovorans).